A 379-amino-acid polypeptide reads, in one-letter code: MPASLTPSLDAFAEAKLAGLNAAGLRRRLVPTARTGGARAERGGRPVVSFSCNDYLGLATHPAVVAAARAALERYGAGSGGSRLVTGDHPVFAELEAELARRKGHEAALVFGSGYLANLGITPALAGAGDLILIDELGHSCMWAGTRLSGARTLPFRHNDLKHLEALLARERGEARHALILTERVFSMDGDRAPVADILDLARSFDAWTLVDDAHGLGVVGPDATAPLEMGTLSKALGSYGGYLCASRAVIDLLTSRARSFVYTTGLPPASAAAALAALRLIEAEPERAARPLALARRFTARLGLPEAQSAVVPVLVGEAEAALALSRALEARGFLVVAIRPPTVPAGTARLRIAFSAAHAEAEVDALAQALSELGAAG.

Substrate is bound by residues R27 and R34. 114–115 serves as a coordination point for pyridoxal 5'-phosphate; that stretch reads GY. H139 lines the substrate pocket. Pyridoxal 5'-phosphate is bound by residues S187, 212 to 215, and 232 to 235; these read DDAH and TLSK. Residue K235 is modified to N6-(pyridoxal phosphate)lysine. Residue T344 coordinates substrate.

The protein belongs to the class-II pyridoxal-phosphate-dependent aminotransferase family. BioF subfamily. As to quaternary structure, homodimer. Pyridoxal 5'-phosphate serves as cofactor.

It catalyses the reaction 6-carboxyhexanoyl-[ACP] + L-alanine + H(+) = (8S)-8-amino-7-oxononanoate + holo-[ACP] + CO2. It participates in cofactor biosynthesis; biotin biosynthesis. In terms of biological role, catalyzes the decarboxylative condensation of pimeloyl-[acyl-carrier protein] and L-alanine to produce 8-amino-7-oxononanoate (AON), [acyl-carrier protein], and carbon dioxide. The protein is 8-amino-7-oxononanoate synthase of Methylobacterium nodulans (strain LMG 21967 / CNCM I-2342 / ORS 2060).